The sequence spans 188 residues: GTP cyclohydrolase 1 (188 aa).

3 residues coordinate Zn(2+): Cys76, His79, and Cys148.

The protein belongs to the GTP cyclohydrolase I family. Homomer.

It carries out the reaction GTP + H2O = 7,8-dihydroneopterin 3'-triphosphate + formate + H(+). It functions in the pathway cofactor biosynthesis; 7,8-dihydroneopterin triphosphate biosynthesis; 7,8-dihydroneopterin triphosphate from GTP: step 1/1. This is GTP cyclohydrolase 1 from Thermoanaerobacter pseudethanolicus (strain ATCC 33223 / 39E) (Clostridium thermohydrosulfuricum).